Consider the following 507-residue polypeptide: ATP synthase subunit alpha, chloroplastic (507 aa).

ATP is bound at residue 170–177; the sequence is GDRQTGKT.

It belongs to the ATPase alpha/beta chains family. F-type ATPases have 2 components, CF(1) - the catalytic core - and CF(0) - the membrane proton channel. CF(1) has five subunits: alpha(3), beta(3), gamma(1), delta(1), epsilon(1). CF(0) has four main subunits: a, b, b' and c.

Its subcellular location is the plastid. The protein resides in the chloroplast thylakoid membrane. It catalyses the reaction ATP + H2O + 4 H(+)(in) = ADP + phosphate + 5 H(+)(out). Its function is as follows. Produces ATP from ADP in the presence of a proton gradient across the membrane. The alpha chain is a regulatory subunit. The protein is ATP synthase subunit alpha, chloroplastic of Huperzia lucidula (Shining clubmoss).